Consider the following 338-residue polypeptide: Probable beta-1,4-xylosyltransferase IRX9 (338 aa).

The disordered stretch occupies residues M1–S21. The Cytoplasmic portion of the chain corresponds to M1–R27. A helical; Signal-anchor for type II membrane protein transmembrane segment spans residues A28–A46. The Lumenal portion of the chain corresponds to P47–L338. N232 and N314 each carry an N-linked (GlcNAc...) asparagine glycan.

The protein belongs to the glycosyltransferase 43 family.

It localises to the golgi apparatus membrane. In terms of biological role, probable beta-1,4-xylosyltransferase involved in xylan biosynthesis in cell walls. This Oryza sativa subsp. japonica (Rice) protein is Probable beta-1,4-xylosyltransferase IRX9.